The following is a 303-amino-acid chain: Leukocyte immunoglobulin-like receptor subfamily B member 4B (303 aa).

A signal peptide spans 1–23; it reads MIAMLTVLLYLALILEPRTAVQA. The Extracellular segment spans residues 24–238; that stretch reads GHLPKPIIWA…TEDGLETYQK (215 aa). 2 Ig-like C2-type domains span residues 42–123 and 124–212; these read YTSV…AYEN and PSLS…KPSN. An intrachain disulfide couples C49 to C98. 3 N-linked (GlcNAc...) asparagine glycosylation sites follow: N79, N133, and N191. C144 and C196 are disulfide-bonded. A helical membrane pass occupies residues 239 to 260; it reads ILIGVLVSFLLLFFLLLFLILI. The Cytoplasmic portion of the chain corresponds to 261 to 303; it reads GYQCRHKNKANASVKNTQSEDNAELNSWNPQNEDPPRELCTPR. A compositionally biased stretch (polar residues) spans 275-292; it reads KNTQSEDNAELNSWNPQN. The tract at residues 275 to 303 is disordered; sequence KNTQSEDNAELNSWNPQNEDPPRELCTPR.

Monomer and homodimer. As to expression, expressed on mast cells (at protein level). Also expressed at much lower levels on natural killer cells (at protein level).

The protein localises to the cell membrane. In terms of biological role, plays a role in mast cell activation. This chain is Leukocyte immunoglobulin-like receptor subfamily B member 4B, found in Mus musculus (Mouse).